A 186-amino-acid polypeptide reads, in one-letter code: Large ribosomal subunit protein uL10 (186 aa).

This sequence belongs to the universal ribosomal protein uL10 family. In terms of assembly, part of the ribosomal stalk of the 50S ribosomal subunit. The N-terminus interacts with L11 and the large rRNA to form the base of the stalk. The C-terminus forms an elongated spine to which L12 dimers bind in a sequential fashion forming a multimeric L10(L12)X complex.

Forms part of the ribosomal stalk, playing a central role in the interaction of the ribosome with GTP-bound translation factors. This Streptomyces virginiae (Streptomyces cinnamonensis) protein is Large ribosomal subunit protein uL10 (rplJ).